We begin with the raw amino-acid sequence, 67 residues long: ATP synthase subunit c (67 aa).

Transmembrane regions (helical) follow at residues 6–26 (ILAL…LVAN) and 46–66 (IMGV…TFFV).

Belongs to the ATPase C chain family. F-type ATPases have 2 components, F(1) - the catalytic core - and F(0) - the membrane proton channel. F(1) has five subunits: alpha(3), beta(3), gamma(1), delta(1), epsilon(1). F(0) has three main subunits: a(1), b(2) and c(10-14). The alpha and beta chains form an alternating ring which encloses part of the gamma chain. F(1) is attached to F(0) by a central stalk formed by the gamma and epsilon chains, while a peripheral stalk is formed by the delta and b chains.

It localises to the cell membrane. Functionally, f(1)F(0) ATP synthase produces ATP from ADP in the presence of a proton or sodium gradient. F-type ATPases consist of two structural domains, F(1) containing the extramembraneous catalytic core and F(0) containing the membrane proton channel, linked together by a central stalk and a peripheral stalk. During catalysis, ATP synthesis in the catalytic domain of F(1) is coupled via a rotary mechanism of the central stalk subunits to proton translocation. In terms of biological role, key component of the F(0) channel; it plays a direct role in translocation across the membrane. A homomeric c-ring of between 10-14 subunits forms the central stalk rotor element with the F(1) delta and epsilon subunits. The sequence is that of ATP synthase subunit c from Streptococcus mutans serotype c (strain ATCC 700610 / UA159).